A 262-amino-acid chain; its full sequence is Type III pantothenate kinase (262 aa).

Residue 5–12 (DAGNTRSK) participates in ATP binding. Substrate-binding positions include tyrosine 102 and 110–113 (GSDR). Catalysis depends on aspartate 112, which acts as the Proton acceptor. K(+) is bound at residue aspartate 132. Threonine 135 lines the ATP pocket. Threonine 190 contacts substrate.

This sequence belongs to the type III pantothenate kinase family. In terms of assembly, homodimer. NH4(+) serves as cofactor. It depends on K(+) as a cofactor.

It is found in the cytoplasm. The catalysed reaction is (R)-pantothenate + ATP = (R)-4'-phosphopantothenate + ADP + H(+). It functions in the pathway cofactor biosynthesis; coenzyme A biosynthesis; CoA from (R)-pantothenate: step 1/5. In terms of biological role, catalyzes the phosphorylation of pantothenate (Pan), the first step in CoA biosynthesis. The sequence is that of Type III pantothenate kinase from Idiomarina loihiensis (strain ATCC BAA-735 / DSM 15497 / L2-TR).